A 322-amino-acid chain; its full sequence is Quinolinate synthase (322 aa).

The iminosuccinate site is built by His37 and Ser54. Cys99 contributes to the [4Fe-4S] cluster binding site. Iminosuccinate is bound by residues 125-127 (YVN) and Ser142. Position 185 (Cys185) interacts with [4Fe-4S] cluster. Iminosuccinate-binding positions include 211–213 (HPE) and Thr228. Cys278 lines the [4Fe-4S] cluster pocket.

It belongs to the quinolinate synthase family. Type 2 subfamily. [4Fe-4S] cluster is required as a cofactor.

The protein localises to the cytoplasm. It catalyses the reaction iminosuccinate + dihydroxyacetone phosphate = quinolinate + phosphate + 2 H2O + H(+). It functions in the pathway cofactor biosynthesis; NAD(+) biosynthesis; quinolinate from iminoaspartate: step 1/1. In terms of biological role, catalyzes the condensation of iminoaspartate with dihydroxyacetone phosphate to form quinolinate. The chain is Quinolinate synthase from Chlorobaculum tepidum (strain ATCC 49652 / DSM 12025 / NBRC 103806 / TLS) (Chlorobium tepidum).